We begin with the raw amino-acid sequence, 156 residues long: Small ribosomal subunit protein uS7 (156 aa).

It belongs to the universal ribosomal protein uS7 family. In terms of assembly, part of the 30S ribosomal subunit. Contacts proteins S9 and S11.

Its function is as follows. One of the primary rRNA binding proteins, it binds directly to 16S rRNA where it nucleates assembly of the head domain of the 30S subunit. Is located at the subunit interface close to the decoding center, probably blocks exit of the E-site tRNA. The sequence is that of Small ribosomal subunit protein uS7 from Buchnera aphidicola subsp. Baizongia pistaciae (strain Bp).